The chain runs to 214 residues: Probable nicotinate-nucleotide adenylyltransferase (214 aa).

It belongs to the NadD family.

The catalysed reaction is nicotinate beta-D-ribonucleotide + ATP + H(+) = deamido-NAD(+) + diphosphate. It participates in cofactor biosynthesis; NAD(+) biosynthesis; deamido-NAD(+) from nicotinate D-ribonucleotide: step 1/1. Catalyzes the reversible adenylation of nicotinate mononucleotide (NaMN) to nicotinic acid adenine dinucleotide (NaAD). The polypeptide is Probable nicotinate-nucleotide adenylyltransferase (Aeromonas salmonicida (strain A449)).